Reading from the N-terminus, the 304-residue chain is Glycine--tRNA ligase alpha subunit (304 aa).

The protein belongs to the class-II aminoacyl-tRNA synthetase family. Tetramer of two alpha and two beta subunits.

It localises to the cytoplasm. It catalyses the reaction tRNA(Gly) + glycine + ATP = glycyl-tRNA(Gly) + AMP + diphosphate. This chain is Glycine--tRNA ligase alpha subunit, found in Photorhabdus laumondii subsp. laumondii (strain DSM 15139 / CIP 105565 / TT01) (Photorhabdus luminescens subsp. laumondii).